The sequence spans 122 residues: Large ribosomal subunit protein uL14 (122 aa).

The protein belongs to the universal ribosomal protein uL14 family. Part of the 50S ribosomal subunit. Forms a cluster with proteins L3 and L19. In the 70S ribosome, L14 and L19 interact and together make contacts with the 16S rRNA in bridges B5 and B8.

Its function is as follows. Binds to 23S rRNA. Forms part of two intersubunit bridges in the 70S ribosome. This chain is Large ribosomal subunit protein uL14, found in Campylobacter fetus subsp. fetus (strain 82-40).